A 354-amino-acid chain; its full sequence is Ribosomal RNA large subunit methyltransferase M (354 aa).

Residues S183, 216 to 219, D235, D255, and D271 each bind S-adenosyl-L-methionine; that span reads SPGG. Residue K300 is the Proton acceptor of the active site.

Belongs to the class I-like SAM-binding methyltransferase superfamily. RNA methyltransferase RlmE family. RlmM subfamily. Monomer.

The protein resides in the cytoplasm. It catalyses the reaction cytidine(2498) in 23S rRNA + S-adenosyl-L-methionine = 2'-O-methylcytidine(2498) in 23S rRNA + S-adenosyl-L-homocysteine + H(+). Functionally, catalyzes the 2'-O-methylation at nucleotide C2498 in 23S rRNA. The protein is Ribosomal RNA large subunit methyltransferase M of Pseudomonas putida (strain ATCC 700007 / DSM 6899 / JCM 31910 / BCRC 17059 / LMG 24140 / F1).